The chain runs to 338 residues: Anthocyanidin reductase ((2S)-flavan-3-ol-forming) (338 aa).

NADP(+) is bound by residues T18–V21, K48, V87–P90, and Y168.

This sequence belongs to the NAD(P)-dependent epimerase/dehydratase family. Dihydroflavonol-4-reductase subfamily. As to expression, expressed in leaves and grape berries.

The catalysed reaction is a (2S,3R)-flavan-3-ol + 2 NADP(+) = an anthocyanidin with a 3-hydroxy group + 2 NADPH + 2 H(+). It catalyses the reaction a (2S,3S)-flavan-3-ol + 2 NADP(+) = an anthocyanidin with a 3-hydroxy group + 2 NADPH + 2 H(+). Its pathway is secondary metabolite biosynthesis; flavonoid biosynthesis. In terms of biological role, produces the terminal flavan-3-ol monomers required for the formation of proanthocyanidins or condensed tannins in leaves and flowers, as well as in the skin and seeds of developing berries. Behaves as a reductase and as a C-3 epimerase. Catalyzes the double reduction of anthocyanidins, producing a mixture of (2S,3S)- and (2S,3R)-flavan-3-ols. The enzyme catalyzes sequential hydride transfers to C-2 and C-4, respectively and epimerization at C-3 is achieved by tautomerization that occurs between the two hydride transfers. Converts cyanidin, pelargonidin and delphinidin into catechin and epicatechin, afzelechin and epiafzelechin, and gallocatechin and epigallocatechin respectively. The sequence is that of Anthocyanidin reductase ((2S)-flavan-3-ol-forming) from Vitis vinifera (Grape).